The sequence spans 189 residues: Cancer/testis antigen family 45 member A1 (189 aa).

Over residues 1–23 (MTDKTEKVAVDPETVFKRPRECD) the composition is skewed to basic and acidic residues. Disordered regions lie at residues 1–27 (MTDK…SPSY) and 83–118 (RMMQ…SPKS).

Belongs to the CT45 family. As to expression, testis specific. Expressed in cancer cell lines.

The protein localises to the nucleus. The protein is Cancer/testis antigen family 45 member A1 of Homo sapiens (Human).